Here is a 192-residue protein sequence, read N- to C-terminus: uncharacterized protein (192 aa).

This is an uncharacterized protein from Sinorhizobium fredii (strain NBRC 101917 / NGR234).